Here is a 107-residue protein sequence, read N- to C-terminus: MRDIMGMMGKVKEMQAKMEKMQAEIAALEIDGTSGGGLVTVRLDGKGHMKSLKVDPSLFKEDDVEILEDLIVAAHKDAKDKAEAVQAEKTRELTAGLPIPPGMKLPF.

Belongs to the YbaB/EbfC family. As to quaternary structure, homodimer.

The protein resides in the cytoplasm. The protein localises to the nucleoid. In terms of biological role, binds to DNA and alters its conformation. May be involved in regulation of gene expression, nucleoid organization and DNA protection. This chain is Nucleoid-associated protein R00231, found in Rhizobium meliloti (strain 1021) (Ensifer meliloti).